We begin with the raw amino-acid sequence, 702 residues long: p-hydroxybenzoic acid--AMP ligase FadD22 (702 aa).

Residues 538–616 (ERHRLVLDAV…GLAQYLEAEL (79 aa)) form the Carrier domain. O-(pantetheine 4'-phosphoryl)serine is present on Ser576.

It belongs to the ATP-dependent AMP-binding enzyme family.

It catalyses the reaction holo-[4-hydroxyphenylalkanoate synthase] + 4-hydroxybenzoate + ATP = 4-hydroxyphenyl-[4-hydroxyphenylalkanoate synthase] + AMP + diphosphate. It participates in lipid metabolism; fatty acid biosynthesis. Catalyzes the adenylation of p-hydroxybenzoic acid (pHBA) to form p-hydroxybenzoic acid-AMP (pHBA-AMP), which is converted directly to p-hydroxybenzoyl-S-FadD22 (pHBA-S-FAdD22) thioester intermediate in a CoA-independent manner by attack of the phosphopantetheine thiol of FadD22. This intermediate primes the biosynthesis of the phenolphthiocerol (PPOL) by presenting the pHBA starter unit for elongation by Pks15/1. PPOL is an important intermediate in the biosynthesis of phenolic glycolipid (mycosid B). In Mycobacterium marinum (strain ATCC BAA-535 / M), this protein is p-hydroxybenzoic acid--AMP ligase FadD22 (fadD22).